Here is a 940-residue protein sequence, read N- to C-terminus: Valine--tRNA ligase (940 aa).

The 'HIGH' region signature appears at 47-57 (PNVTGILHMGH). The 'KMSKS' region signature appears at 564-568 (KLSKS). Position 567 (Lys-567) interacts with ATP. Positions 872–938 (PIEQITKEKN…LQSILDKLAS (67 aa)) form a coiled coil.

This sequence belongs to the class-I aminoacyl-tRNA synthetase family. ValS type 1 subfamily. As to quaternary structure, monomer.

The protein resides in the cytoplasm. It carries out the reaction tRNA(Val) + L-valine + ATP = L-valyl-tRNA(Val) + AMP + diphosphate. In terms of biological role, catalyzes the attachment of valine to tRNA(Val). As ValRS can inadvertently accommodate and process structurally similar amino acids such as threonine, to avoid such errors, it has a 'posttransfer' editing activity that hydrolyzes mischarged Thr-tRNA(Val) in a tRNA-dependent manner. The protein is Valine--tRNA ligase of Chlamydia felis (strain Fe/C-56) (Chlamydophila felis).